The primary structure comprises 434 residues: BEN domain-containing protein 7 (434 aa).

Residues K16, K56, and K85 each participate in a glycyl lysine isopeptide (Lys-Gly) (interchain with G-Cter in SUMO2) cross-link. Disordered regions lie at residues 96-151 (PQRS…SNGE) and 212-262 (SRKR…ERTS). Positions 97–150 (QRSNSSTEASQGLHSNSRGAWNELPTQSGQFSGQSGPRSRTFQTQPHISASSNG) are enriched in polar residues. The segment covering 212–222 (SRKRNKKKKVL) has biased composition (basic residues). Residue K244 forms a Glycyl lysine isopeptide (Lys-Gly) (interchain with G-Cter in SUMO2) linkage. Residues 289 to 399 (GFDVFMPKSQ…RRLKRGSAEV (111 aa)) enclose the BEN domain. T326 is modified (phosphothreonine). S330 carries the phosphoserine modification. The tract at residues 414-434 (TGHTFVIKRETPEDPEPGSVA) is disordered.

This chain is BEN domain-containing protein 7 (Bend7), found in Mus musculus (Mouse).